A 1032-amino-acid polypeptide reads, in one-letter code: Kinesin heavy chain isoform 5A (1032 aa).

Position 2 is an N-acetylalanine (alanine 2). The Kinesin motor domain occupies serine 9–isoleucine 327. Glycine 86–threonine 93 contacts ATP. The segment at valine 174–lysine 315 is microtubule-binding. The interval glutamate 271–alanine 361 is necessary for interaction with ZFYVE27. The stretch at alanine 331–tyrosine 906 forms a coiled coil. An interaction with BICD2 region spans residues threonine 353–serine 1032. Threonine 397 carries the post-translational modification Phosphothreonine. 2 disordered regions span residues tyrosine 906–arginine 939 and serine 978–leucine 1010. The segment at lysine 907–serine 1032 is globular. A compositionally biased stretch (low complexity) spans serine 978–serine 989. The span at glutamine 991–isoleucine 1003 shows a compositional bias: polar residues.

It belongs to the TRAFAC class myosin-kinesin ATPase superfamily. Kinesin family. Kinesin subfamily. In terms of assembly, oligomer composed of two heavy chains and two light chains. Interacts with GRIP1. Interacts with FMR1 (via C-terminus); this interaction is increased in a mGluR-dependent manner. Interacts with ZFYVE27. Interacts with VAPA, VAPB, SURF4, RAB11A (GDP-bound form), RAB11B (GDP-bound form) and RTN3 in a ZFYVE27-dependent manner. Interacts with BORCS5. Interacts with BICD2. Interacts with DTNB. As to expression, distributed throughout the CNS but is highly enriched in subsets of neurons.

The protein resides in the cytoplasm. The protein localises to the perinuclear region. It is found in the cytoskeleton. It localises to the perikaryon. The catalysed reaction is ATP + H2O + a kinesin associated with a microtubule at position (n) = ADP + phosphate a kinesin associated with a microtubule at position (n+1, toward the plus end).. Microtubule-dependent motor required for slow axonal transport of neurofilament proteins (NFH, NFM and NFL). Can induce formation of neurite-like membrane protrusions in non-neuronal cells in a ZFYVE27-dependent manner. The ZFYVE27-KIF5A complex contributes to the vesicular transport of VAPA, VAPB, SURF4, RAB11A, RAB11B and RTN3 proteins in neurons. Required for anterograde axonal transportation of MAPK8IP3/JIP3 which is essential for MAPK8IP3/JIP3 function in axon elongation. This chain is Kinesin heavy chain isoform 5A, found in Homo sapiens (Human).